A 420-amino-acid chain; its full sequence is 3-isopropylmalate dehydratase large subunit (420 aa).

Positions 300, 360, and 363 each coordinate [4Fe-4S] cluster.

This sequence belongs to the aconitase/IPM isomerase family. LeuC type 2 subfamily. In terms of assembly, heterodimer of LeuC and LeuD. [4Fe-4S] cluster serves as cofactor.

The catalysed reaction is (2R,3S)-3-isopropylmalate = (2S)-2-isopropylmalate. It participates in amino-acid biosynthesis; L-leucine biosynthesis; L-leucine from 3-methyl-2-oxobutanoate: step 2/4. Its function is as follows. Catalyzes the isomerization between 2-isopropylmalate and 3-isopropylmalate, via the formation of 2-isopropylmaleate. The polypeptide is 3-isopropylmalate dehydratase large subunit (Clostridium kluyveri (strain ATCC 8527 / DSM 555 / NBRC 12016 / NCIMB 10680 / K1)).